Reading from the N-terminus, the 385-residue chain is MYVRHLGLRDFRSWACVDLELHPGRTVFVGPNGYGKTNLIEALWYSTTLGSHRVSADLPLIRVGTDRAVISTIVVNDGRECAVDLEIATGRVNKARLNRSSVRSTRDVVGVLRAVLFAPEDLGLVRGDPADRRRYLDDLAIVRRPAIAAVRAEYERVLRQRTALLKSVPGARYRGDRGVFDTLEVWDSRLAEHGAELVAARIDLVNQLAPEVKKAYQLLAPESRSASIGYRASMDVTGPSEQSDIDRQLLAARLLAALAARRDAELERGVCLVGPHRDDLILRLGDQPAKGFASHGEAWSLAVALRLAAYQLLRVDGGEPVLLLDDVFAELDVMRRRALATAAESAEQVLVTAAVLEDIPAGWDARRVHIDVRADDTGSMSVVLP.

30–37 (GPNGYGKT) contributes to the ATP binding site.

It belongs to the RecF family.

It localises to the cytoplasm. In terms of biological role, the RecF protein is involved in DNA metabolism; it is required for DNA replication and normal SOS inducibility. RecF binds preferentially to single-stranded, linear DNA. It also seems to bind ATP. In Mycobacterium tuberculosis (strain ATCC 25177 / H37Ra), this protein is DNA replication and repair protein RecF.